The sequence spans 492 residues: Catalase-1 (492 aa).

Catalysis depends on residues histidine 65 and asparagine 138. Tyrosine 348 provides a ligand contact to heme.

Belongs to the catalase family. Homotetramer. The cofactor is heme.

The protein resides in the peroxisome. Its subcellular location is the glyoxysome. It catalyses the reaction 2 H2O2 = O2 + 2 H2O. Functionally, occurs in almost all aerobically respiring organisms and serves to protect cells from the toxic effects of hydrogen peroxide. The protein is Catalase-1 (CAT1) of Triticum aestivum (Wheat).